The primary structure comprises 492 residues: Gamma-aminobutyric acid receptor subunit alpha-3 (492 aa).

Positions 1–28 are cleaved as a signal peptide; that stretch reads MIITQTSHCYMTSLGILFLINILPGTTG. The disordered stretch occupies residues 28 to 54; the sequence is GQGESRRQEPGDFVKQDIGGLSPKHAP. At 29 to 274 the chain is on the extracellular side; sequence QGESRRQEPG…MTTHFHLKRK (246 aa). Basic and acidic residues predominate over residues 31–42; that stretch reads ESRRQEPGDFVK. N-linked (GlcNAc...) asparagine glycosylation is present at N63. Residue R119 coordinates 4-aminobutanoate. N-linked (GlcNAc...) asparagine glycans are attached at residues N163 and N176. Residue T182 coordinates 4-aminobutanoate. The cysteines at positions 191 and 205 are disulfide-linked. An N-linked (GlcNAc...) asparagine glycan is attached at N228. A helical membrane pass occupies residues 275 to 295; sequence IGYFVIQTYLPCIMTVILSQV. The Cytoplasmic segment spans residues 296 to 305; sequence SFWLNRESVP. A helical transmembrane segment spans residues 306–325; the sequence is ARTVFGVTTVLTMTTLSISA. Residues 326 to 336 are Extracellular-facing; that stretch reads RNSLPKVAYAT. A helical transmembrane segment spans residues 337-357; the sequence is AMDWFIAVCYAFVFSALIEFA. At 358–457 the chain is on the cytoplasmic side; that stretch reads TVNYFTKRSW…TYNSVSKVDK (100 aa). Phosphoserine is present on S426. Residue T427 is modified to Phosphothreonine. 2 positions are modified to phosphoserine: S433 and S442. Residues 458 to 478 traverse the membrane as a helical segment; that stretch reads ISRIIFPVLFAIFNLVYWATY. Residues 479–492 lie on the Extracellular side of the membrane; the sequence is VNRESAIKGMIRKQ.

This sequence belongs to the ligand-gated ion channel (TC 1.A.9) family. Gamma-aminobutyric acid receptor (TC 1.A.9.5) subfamily. GABRA3 sub-subfamily. As to quaternary structure, heteropentamer, formed by a combination of alpha (GABRA1-6), beta (GABRB1-3), gamma (GABRG1-3), delta (GABRD), epsilon (GABRE), rho (GABRR1-3), pi (GABRP) and theta (GABRQ) chains, each subunit exhibiting distinct physiological and pharmacological properties. Binds UBQLN1. Interacts with GPHN.

It localises to the postsynaptic cell membrane. The protein resides in the cell membrane. The enzyme catalyses chloride(in) = chloride(out). With respect to regulation, potentiated by etomidate, propofol, pregnanolone and flurazepam. Alpha subunit of the heteropentameric ligand-gated chloride channel gated by gamma-aminobutyric acid (GABA), a major inhibitory neurotransmitter in the brain. GABA-gated chloride channels, also named GABA(A) receptors (GABAAR), consist of five subunits arranged around a central pore and contain GABA active binding site(s) located at the alpha and beta subunit interface(s). When activated by GABA, GABAARs selectively allow the flow of chloride anions across the cell membrane down their electrochemical gradient. Chloride influx into the postsynaptic neuron following GABAAR opening decreases the neuron ability to generate a new action potential, thereby reducing nerve transmission. The polypeptide is Gamma-aminobutyric acid receptor subunit alpha-3 (Homo sapiens (Human)).